A 1465-amino-acid chain; its full sequence is DNA polymerase III PolC-type (1465 aa).

In terms of domain architecture, Exonuclease spans 427 to 583 (YVVFDVETTG…YDAEATGRLL (157 aa)).

Belongs to the DNA polymerase type-C family. PolC subfamily.

Its subcellular location is the cytoplasm. The catalysed reaction is DNA(n) + a 2'-deoxyribonucleoside 5'-triphosphate = DNA(n+1) + diphosphate. Required for replicative DNA synthesis. This DNA polymerase also exhibits 3' to 5' exonuclease activity. This chain is DNA polymerase III PolC-type, found in Streptococcus pyogenes serotype M12 (strain MGAS2096).